The chain runs to 363 residues: 3-isopropylmalate dehydrogenase (363 aa).

78–91 serves as a coordination point for NAD(+); that stretch reads GPKWENLPPESQPE. Substrate is bound by residues arginine 99, arginine 109, arginine 138, and aspartate 227. Mg(2+)-binding residues include aspartate 227, aspartate 251, and aspartate 255. 285 to 297 is a binding site for NAD(+); the sequence is GSAPDIAGKNIAN.

This sequence belongs to the isocitrate and isopropylmalate dehydrogenases family. LeuB type 1 subfamily. In terms of assembly, homodimer. Mg(2+) is required as a cofactor. Requires Mn(2+) as cofactor.

It is found in the cytoplasm. It catalyses the reaction (2R,3S)-3-isopropylmalate + NAD(+) = 4-methyl-2-oxopentanoate + CO2 + NADH. The protein operates within amino-acid biosynthesis; L-leucine biosynthesis; L-leucine from 3-methyl-2-oxobutanoate: step 3/4. In terms of biological role, catalyzes the oxidation of 3-carboxy-2-hydroxy-4-methylpentanoate (3-isopropylmalate) to 3-carboxy-4-methyl-2-oxopentanoate. The product decarboxylates to 4-methyl-2 oxopentanoate. The protein is 3-isopropylmalate dehydrogenase of Salmonella choleraesuis (strain SC-B67).